A 617-amino-acid polypeptide reads, in one-letter code: DNA-(apurinic or apyrimidinic site) endonuclease (617 aa).

A disordered region spans residues 74–99 (IKNSDEQNNSNNNNNNSSSSNFCSNN). The segment covering 81 to 99 (NNSNNNNNNSSSSNFCSNN) has biased composition (low complexity). Positions 284 and 317 each coordinate Mg(2+). A disordered region spans residues 326 to 349 (SEPCDNKNKNKNKNDGIRDRGKIK). The segment covering 329-349 (CDNKNKNKNKNDGIRDRGKIK) has biased composition (basic and acidic residues). Positions 474, 476, 606, and 607 each coordinate Mg(2+). Catalysis depends on His-607, which acts as the Proton acceptor.

Belongs to the DNA repair enzymes AP/ExoA family. Requires Mg(2+) as cofactor. The cofactor is Mn(2+). Post-translationally, may be proteolytically cleaved into a 64 kDa form.

It localises to the mitochondrion. The enzyme catalyses Exonucleolytic cleavage in the 3'- to 5'-direction to yield nucleoside 5'-phosphates.. Its activity is regulated as follows. Apurinic/apyrimidinic (AP) endonuclease activity is maximal at low Mg(2+) (0.5-2 mM) with no activity seen at high concentrations (more than 10 mM). 3'-5' exonuclease activity is maximal in the range of 0.5-2 mM Mg(2+) with activity seen up to 10 mM Mg(2+). In terms of biological role, multifunctional protein that plays a central role in mitochondrial DNA base excision repair (BER) pathway induced by oxidative stress. Has apurinic/apyrimidinic (AP) endonuclease activity towards double-stranded DNA (dsDNA). Has nucleotide incision repair (NIR) activity; acts on dsDNA with oxidized bases thymine glycol and 5,6-dihydro-2'-deoxyuridine. Has 3'-5' exonuclease; can use dsDNA templates with 3'-OH termini including blunt-end, gapped and mismatched 3'-recessed. Has 3'-phosphatase activity; cleaves 3'-phosphate from blunt, recessed and gapped dsDNA templates, followed by 3'-5' exonuclease activity. Has RNase H-like activity; cleaves RNA on 3'-recessed RNA-DNA duplex. Plays a role in merosome infection of host erythrocytes. The chain is DNA-(apurinic or apyrimidinic site) endonuclease from Plasmodium falciparum (isolate 3D7).